A 69-amino-acid chain; its full sequence is Large ribosomal subunit protein uL29 (69 aa).

The protein belongs to the universal ribosomal protein uL29 family.

This chain is Large ribosomal subunit protein uL29, found in Mycoplasmopsis agalactiae (strain NCTC 10123 / CIP 59.7 / PG2) (Mycoplasma agalactiae).